We begin with the raw amino-acid sequence, 826 residues long: Ribonucleoside-diphosphate reductase large subunit (826 aa).

Substrate-binding positions include Thr171, 186–187 (SC), Gly217, 387–391 (NLCAE), and 594–598 (PTSGC). A disulfide bridge connects residues Cys187 and Cys403. The Proton acceptor role is filled by Asn387. Residue Cys389 is the Cysteine radical intermediate of the active site. Glu391 (proton acceptor) is an active-site residue.

It belongs to the ribonucleoside diphosphate reductase large chain family. As to quaternary structure, heterotetramer composed of a homodimer of the large subunit (R1) and a homodimer of the small subunit (R2). Larger multisubunit protein complex are also active, composed of (R1)n(R2)n.

The enzyme catalyses a 2'-deoxyribonucleoside 5'-diphosphate + [thioredoxin]-disulfide + H2O = a ribonucleoside 5'-diphosphate + [thioredoxin]-dithiol. Ribonucleoside-diphosphate reductase holoenzyme provides the precursors necessary for viral DNA synthesis. Allows virus growth in non-dividing cells, as well as reactivation from latency in infected hosts. Catalyzes the biosynthesis of deoxyribonucleotides from the corresponding ribonucleotides. The protein is Ribonucleoside-diphosphate reductase large subunit of Epstein-Barr virus (strain GD1) (HHV-4).